We begin with the raw amino-acid sequence, 359 residues long: MLGRSLTSVLIVPTGIGCAVGGYAGDALPLARAIASVSDRLITHPNVMNGASLYWPLPNVAYVEGYALDRFAAGDWQLQPVHCNRIGLLLDAAIEPELRIRHQQVAEAAQATLGLSVTAAVITDAPLGVTLRQADSGSTWGTIDRPDSLLRAADQLLKAGCEAIAVIARFPDDPGAIALQDYRQGQGVDPLAGAEAVISHLIVREFQVPCAHAPALQPLPLDASISPRSAAEELGHTFLPCVLAGLSRAPRYRSATESIAESIRPESVDVVIAPETAIGGPGILHWAARGIPILAVAENRSTLDLRPVDLGVPVQHLQTHLEAVGWLAAYKAGLDPAALSPGDRRLSYLNHSVQQATSG.

The first 17 residues, M1–G17, serve as a signal peptide directing secretion. C18 carries the N-palmitoyl cysteine lipid modification. C18 is lipidated: S-diacylglycerol cysteine.

It is found in the cell membrane. This is an uncharacterized protein from Synechococcus sp. (strain ATCC 27144 / PCC 6301 / SAUG 1402/1) (Anacystis nidulans).